We begin with the raw amino-acid sequence, 536 residues long: Cytochrome P450 monooxygenase macC (536 aa).

A helical transmembrane segment spans residues 2-22 (ALLYITTAALALLLLFLRAVF). A heme-binding site is contributed by C448.

The protein belongs to the cytochrome P450 family. It depends on heme as a cofactor.

The protein localises to the membrane. Its pathway is secondary metabolite biosynthesis; terpenoid biosynthesis. Cytochrome P450 monooxygenase; part of the gene cluster that mediates the biosynthesis of macrophorins, isoprenoid epoxycyclohexenones containing cyclized drimane moieties. The first step of the pathway is the synthesis of 6-methylsalicylic acid (6-MSA) by the polyketide synthase macA. 6-MSA is then converted to m-cresol by the decarboxylase macB. The cytochrome P450 monooxygenase macC then catalyzes the oxidation of m-cresol to toluquinol. Epoxidation of toluquinol is then performed by the short chain dehydrogenase macD, with the help of macE, and a further prenylation by macG leads to 7-deacetoxyyanuthone A. The next step is the hydroxylation of C-22 of 7-deacetoxyyanuthone A by the cytochrome P450 monooxygenase macH to yield 22-deacetylyanuthone A. O-Mevalon transferase macI then attaches mevalon to the hydroxyl group of 22-deacetylyanuthone A to produce yanuthone E. The terpene cyclase macJ catalyzes the cyclization of 22-deacetylyanuthone A to macrophorin A. MacJ is also able to catalyze cyclization of yanuthone E and 7-deacetoxyyanuthone A to their corresponding macrophorins. The macJ products can be further modified by macH and macJ, as well as by the FAD-dependent monooxygenase macF, to produce additional macrophorins, including 4'-oxomacrophorin A, 4'-oxomacrophorin D and 4'-oxomacrophorin E. The sequence is that of Cytochrome P450 monooxygenase macC from Penicillium terrestre.